The following is a 254-amino-acid chain: Geranylgeranylglyceryl phosphate synthase (254 aa).

Mg(2+) contacts are provided by Asp-28 and Ser-57. Residues 176–182 (YLEAGSG), 207–208 (GG), and 229–230 (GT) contribute to the sn-glycerol 1-phosphate site.

It belongs to the GGGP/HepGP synthase family. Group II subfamily. Requires Mg(2+) as cofactor.

It localises to the cytoplasm. It catalyses the reaction sn-glycerol 1-phosphate + (2E,6E,10E)-geranylgeranyl diphosphate = sn-3-O-(geranylgeranyl)glycerol 1-phosphate + diphosphate. It participates in membrane lipid metabolism; glycerophospholipid metabolism. Prenyltransferase that catalyzes the transfer of the geranylgeranyl moiety of geranylgeranyl diphosphate (GGPP) to the C3 hydroxyl of sn-glycerol-1-phosphate (G1P). This reaction is the first ether-bond-formation step in the biosynthesis of archaeal membrane lipids. The protein is Geranylgeranylglyceryl phosphate synthase of Pyrococcus horikoshii (strain ATCC 700860 / DSM 12428 / JCM 9974 / NBRC 100139 / OT-3).